The chain runs to 266 residues: MDTFQVIILALIQGLTEFLPISSSAHLILPAELLGWEDQGLSFDVAVNTGSLLAVVIYFRHELWNMFTAWIASIFKGKQSDDSKLAWWIILATLPAVFFGFMAKDFIETHLRSAEVIAVTTIVFGLLLWWADKMSHQDLTVYQTGWRKALLIGFAQALALIPGTSRSGATMTAALMLGLSRDAAARFSFLMSVPVSLGAAILVGKDLSESSLPIDYQALTLGTLVSFVAAYLCIHYFLKIISRMGMTPFVIYRLILGAVLCGFIFL.

8 helical membrane passes run 1-21 (MDTF…FLPI), 39-59 (QGLS…VIYF), 87-107 (WWII…KDFI), 111-131 (LRSA…LWWA), 149-169 (ALLI…RSGA), 183-203 (AAAR…AILV), 218-238 (ALTL…HYFL), and 246-266 (MTPF…FIFL).

The protein belongs to the UppP family.

The protein resides in the cell inner membrane. The catalysed reaction is di-trans,octa-cis-undecaprenyl diphosphate + H2O = di-trans,octa-cis-undecaprenyl phosphate + phosphate + H(+). Functionally, catalyzes the dephosphorylation of undecaprenyl diphosphate (UPP). Confers resistance to bacitracin. In Shewanella putrefaciens (strain CN-32 / ATCC BAA-453), this protein is Undecaprenyl-diphosphatase.